A 124-amino-acid polypeptide reads, in one-letter code: Fluoride-specific ion channel FluC (124 aa).

4 consecutive transmembrane segments (helical) span residues 4–24 (LIFV…ISIF), 35–55 (FGTL…YALG), 62–82 (PEIK…FSTF), and 102–122 (IALN…LVFS). The Na(+) site is built by Gly-74 and Thr-77.

It belongs to the fluoride channel Fluc/FEX (TC 1.A.43) family.

Its subcellular location is the cell inner membrane. It carries out the reaction fluoride(in) = fluoride(out). Na(+) is not transported, but it plays an essential structural role and its presence is essential for fluoride channel function. In terms of biological role, fluoride-specific ion channel. Important for reducing fluoride concentration in the cell, thus reducing its toxicity. This Shewanella loihica (strain ATCC BAA-1088 / PV-4) protein is Fluoride-specific ion channel FluC.